The primary structure comprises 491 residues: UDP-N-acetylmuramate--L-alanine ligase (491 aa).

Residue 126 to 132 (GTHGKTT) participates in ATP binding.

This sequence belongs to the MurCDEF family.

The protein resides in the cytoplasm. The catalysed reaction is UDP-N-acetyl-alpha-D-muramate + L-alanine + ATP = UDP-N-acetyl-alpha-D-muramoyl-L-alanine + ADP + phosphate + H(+). It functions in the pathway cell wall biogenesis; peptidoglycan biosynthesis. Its function is as follows. Cell wall formation. In Shigella flexneri serotype 5b (strain 8401), this protein is UDP-N-acetylmuramate--L-alanine ligase.